A 195-amino-acid polypeptide reads, in one-letter code: dTTP/UTP pyrophosphatase (195 aa).

The active-site Proton acceptor is the Asp73.

Belongs to the Maf family. YhdE subfamily. It depends on a divalent metal cation as a cofactor.

Its subcellular location is the cytoplasm. The catalysed reaction is dTTP + H2O = dTMP + diphosphate + H(+). The enzyme catalyses UTP + H2O = UMP + diphosphate + H(+). Its function is as follows. Nucleoside triphosphate pyrophosphatase that hydrolyzes dTTP and UTP. May have a dual role in cell division arrest and in preventing the incorporation of modified nucleotides into cellular nucleic acids. The protein is dTTP/UTP pyrophosphatase of Deinococcus radiodurans (strain ATCC 13939 / DSM 20539 / JCM 16871 / CCUG 27074 / LMG 4051 / NBRC 15346 / NCIMB 9279 / VKM B-1422 / R1).